Here is a 151-residue protein sequence, read N- to C-terminus: Ribosomal RNA large subunit methyltransferase H (151 aa).

Residues L73, G100, and 119–124 each bind S-adenosyl-L-methionine; that span reads LSKMTM.

The protein belongs to the RNA methyltransferase RlmH family. Homodimer.

It localises to the cytoplasm. It catalyses the reaction pseudouridine(1915) in 23S rRNA + S-adenosyl-L-methionine = N(3)-methylpseudouridine(1915) in 23S rRNA + S-adenosyl-L-homocysteine + H(+). Specifically methylates the pseudouridine at position 1915 (m3Psi1915) in 23S rRNA. This Campylobacter concisus (strain 13826) protein is Ribosomal RNA large subunit methyltransferase H.